The primary structure comprises 341 residues: Retinol dehydrogenase 10 (341 aa).

A helical; Signal-anchor membrane pass occupies residues 3–23 (IVLEFFLVTFKVLWAFVLAAA). Position 40-64 (40-64 (LITGAGSGLGRLFALEFARRRAQLV)) interacts with NADP(+). Ser-197 contacts substrate. The active-site Proton acceptor is the Tyr-210.

The protein belongs to the short-chain dehydrogenases/reductases (SDR) family.

It is found in the microsome membrane. The protein resides in the endoplasmic reticulum membrane. The enzyme catalyses all-trans-retinol + NADP(+) = all-trans-retinal + NADPH + H(+). Its pathway is cofactor metabolism; retinol metabolism. In terms of biological role, retinol dehydrogenase with a clear preference for NADP. Converts all-trans-retinol to all-trans-retinal. Has no detectable activity towards 11-cis-retinol, 9-cis-retinol and 13-cis-retinol. The chain is Retinol dehydrogenase 10 (rdh10) from Xenopus tropicalis (Western clawed frog).